Here is a 147-residue protein sequence, read N- to C-terminus: UPF0208 membrane protein PM0703 (147 aa).

The next 2 helical transmembrane spans lie at V32 to T52 and L65 to W85.

This sequence belongs to the UPF0208 family.

The protein localises to the cell inner membrane. This Pasteurella multocida (strain Pm70) protein is UPF0208 membrane protein PM0703.